The chain runs to 150 residues: Probable antibacterial peptide (150 aa).

Residues 1 to 19 form the signal peptide; sequence MHIARFCLLSSMAVLALSA.

The protein resides in the secreted. In terms of biological role, has antibacterial activity in vitro. This Riptortus clavatus (Bean bug) protein is Probable antibacterial peptide.